The primary structure comprises 313 residues: S-methyl-5'-thioadenosine phosphorylase (313 aa).

Residues Thr-20, 68 to 69 (RH), and 101 to 102 (SA) each bind phosphate. A substrate-binding site is contributed by Met-203. Ser-204 contributes to the phosphate binding site. Residue 227 to 229 (DYD) coordinates substrate.

The protein belongs to the PNP/MTAP phosphorylase family. MTAP subfamily. As to quaternary structure, homotrimer.

Its subcellular location is the cytoplasm. The protein resides in the nucleus. It carries out the reaction S-methyl-5'-thioadenosine + phosphate = 5-(methylsulfanyl)-alpha-D-ribose 1-phosphate + adenine. The protein operates within amino-acid biosynthesis; L-methionine biosynthesis via salvage pathway; S-methyl-5-thio-alpha-D-ribose 1-phosphate from S-methyl-5'-thioadenosine (phosphorylase route): step 1/1. Functionally, catalyzes the reversible phosphorylation of S-methyl-5'-thioadenosine (MTA) to adenine and 5-methylthioribose-1-phosphate. Involved in the breakdown of MTA, a major by-product of polyamine biosynthesis. Responsible for the first step in the methionine salvage pathway after MTA has been generated from S-adenosylmethionine. Has broad substrate specificity with 6-aminopurine nucleosides as preferred substrates. This Ajellomyces capsulatus (strain G186AR / H82 / ATCC MYA-2454 / RMSCC 2432) (Darling's disease fungus) protein is S-methyl-5'-thioadenosine phosphorylase.